Here is an 81-residue protein sequence, read N- to C-terminus: MSKGQSLQDPYLNILRKERVPVSIFLVNGIKLQGQIESFDQFVILLKNTVSQMVYKHAISTVVPSRTIRIPSPDQPEDDAE.

One can recognise a Sm domain in the interval 9-68 (DPYLNILRKERVPVSIFLVNGIKLQGQIESFDQFVILLKNTVSQMVYKHAISTVVPSRTI).

The protein belongs to the Hfq family. Homohexamer.

In terms of biological role, RNA chaperone that binds small regulatory RNA (sRNAs) and mRNAs to facilitate mRNA translational regulation in response to envelope stress, environmental stress and changes in metabolite concentrations. Also binds with high specificity to tRNAs. This chain is RNA-binding protein Hfq, found in Marinomonas sp. (strain MWYL1).